The chain runs to 521 residues: MSL complex subunit 3 (521 aa).

In terms of domain architecture, Tudor-knot spans 13–71; the sequence is SGEKVLCFEPDPTKARVLYDAKIVDVIVGKDEKGRKIPEYLIHFNGWNRSWDRWAAEDH. Disordered regions lie at residues 114–166 and 298–409; these read KGLP…TRRE and ATST…PSKE. Over residues 139 to 149 the composition is skewed to acidic residues; it reads KDEEISEESDI. Residues 150 to 166 are compositionally biased toward basic and acidic residues; it reads EEKTEVKEEPELQTRRE. An MRG domain is found at 168-517; it reads EERTITIEIP…CEAHYSTKNP (350 aa). Residues 290–440 are required for the histone acetyltransferase activity of the MSL complex; that stretch reads FFLPIKESAT…WKLVPDNYPP (151 aa). Residues serine 309 and serine 311 each carry the phosphoserine modification. The segment covering 316–329 has biased composition (low complexity); that stretch reads NPSTPQSTESQPTT. Phosphoserine occurs at positions 367 and 400. At threonine 405 the chain carries Phosphothreonine. Serine 407 and serine 411 each carry phosphoserine.

As to quaternary structure, component of the MSL histone acetyltransferase complex at least composed of the KAT8/MOF, MSL1/hampin, MSL2 and MSL3. Interacts (via the MRG domain) with MSL1 and KAT8/MOF. As to expression, expressed in many tissues including liver, pancreas, heart, lung, kidney, skeletal muscle, brain, and placenta, with highest expression in skeletal muscle and heart.

The protein localises to the nucleus. Its function is as follows. Non-catalytic component of the MSL histone acetyltransferase complex, a multiprotein complex that mediates the majority of histone H4 acetylation at 'Lys-16' (H4K16ac), an epigenetic mark that prevents chromatin compaction. The MSL complex is required for chromosome stability and genome integrity by maintaining homeostatic levels of H4K16ac. The MSL complex is also involved in gene dosage by promoting up-regulation of genes expressed by the X chromosome. X up-regulation is required to compensate for autosomal biallelic expression. The MSL complex also participates in gene dosage compensation by promoting expression of Tsix non-coding RNA. Acts as a histone reader that specifically recognizes and binds histone H4 monomethylated at 'Lys-20' (H4K20Me1) in a DNA-dependent manner and is proposed to be involved in chromosomal targeting of the MSL complex. May play a role X inactivation in females. This chain is MSL complex subunit 3, found in Homo sapiens (Human).